An 88-amino-acid chain; its full sequence is FAD assembly factor SdhE (88 aa).

This sequence belongs to the SdhE FAD assembly factor family. Monomer. Makes weak or transient interactions with SdhA. Interacts with YgfX. Interacts with FrdA.

The protein localises to the cytoplasm. The protein operates within antibiotic biosynthesis; prodigiosin biosynthesis. Its function is as follows. An FAD assembly protein, which accelerates covalent attachment of the cofactor into other proteins. Plays an essential role in the assembly of succinate dehydrogenase (SDH, respiratory complex II), an enzyme complex that is a component of both the tricarboxylic acid cycle and the electron transport chain, and which couples the oxidation of succinate to fumarate with the reduction of ubiquinone (coenzyme Q) to ubiquinol. Required for flavinylation (covalent attachment of FAD) of the flavoprotein subunit SdhA of SDH. Required for flavinylation of the flavoprotein subunit FrdA of fumarate reductase (FRD). Flavinylation of SDH and FRD occurs in a similar but not identical manner, as site-specific mutations display subtle differences between them. Flavinylates SdhA in vivo in the absence of the other SDH subunits; SdhE mutants that do not flavinylate also interfere with wild-type activity in a possible dominant-negative fashion. Weakly binds to FAD and facilitates its binding to SdhA. Required for production of prodigiosin antibiotic (Pig); overproduction of SdhE in a deletion mutant leads to decreased synthesis of Pig compared to wild-type. Capable of flavinylating A.pasteurianus SdhA when the SDH operon and this gene are expressed in G.oxydans; flavinylation of SdhA is detected only in the presence of sdhE. This Serratia sp. (strain ATCC 39006) (Prodigiosinella confusarubida) protein is FAD assembly factor SdhE.